A 392-amino-acid chain; its full sequence is tRNA(Met) cytidine acetate ligase (392 aa).

ATP-binding positions include 7 to 20 (VVEY…HQLH), Gly-101, Asn-162, and 187 to 188 (RI).

It belongs to the TmcAL family.

The protein resides in the cytoplasm. The enzyme catalyses cytidine(34) in elongator tRNA(Met) + acetate + ATP = N(4)-acetylcytidine(34) in elongator tRNA(Met) + AMP + diphosphate. In terms of biological role, catalyzes the formation of N(4)-acetylcytidine (ac(4)C) at the wobble position of elongator tRNA(Met), using acetate and ATP as substrates. First activates an acetate ion to form acetyladenylate (Ac-AMP) and then transfers the acetyl group to tRNA to form ac(4)C34. The protein is tRNA(Met) cytidine acetate ligase of Listeria welshimeri serovar 6b (strain ATCC 35897 / DSM 20650 / CCUG 15529 / CIP 8149 / NCTC 11857 / SLCC 5334 / V8).